The chain runs to 305 residues: Serine/threonine-protein phosphatase PP-X homolog 3 (305 aa).

The Mn(2+) site is built by Asp-53, His-55, Asp-81, and Asn-113. The active-site Proton donor is the His-114. Positions 163 and 237 each coordinate Mn(2+).

This sequence belongs to the PPP phosphatase family. PP-4 (PP-X) subfamily. It depends on Mn(2+) as a cofactor.

It carries out the reaction O-phospho-L-seryl-[protein] + H2O = L-seryl-[protein] + phosphate. The enzyme catalyses O-phospho-L-threonyl-[protein] + H2O = L-threonyl-[protein] + phosphate. The protein is Serine/threonine-protein phosphatase PP-X homolog 3 (Ppx3) of Paramecium tetraurelia.